The chain runs to 156 residues: Probable succinate transporter subunit YjjB (156 aa).

4 helical membrane passes run 7–27, 54–74, 86–106, and 128–148; these read WALL…AMVF, FGMN…VIGI, VFTV…TAMI, and FLKA…PGLW.

This sequence belongs to the ThrE exporter (TC 2.A.79) family. In terms of assembly, the transporter is composed of YjjB and YjjP.

It localises to the cell inner membrane. Its function is as follows. Involved in succinate export with YjjP. Both proteins are required for export. In Yersinia pseudotuberculosis serotype I (strain IP32953), this protein is Probable succinate transporter subunit YjjB.